The primary structure comprises 290 residues: Probable adenylate kinase 2, chloroplastic (290 aa).

A compositionally biased stretch (low complexity) spans 1-10; that stretch reads MASSMAATAT. The segment at 1 to 37 is disordered; the sequence is MASSMAATATLSPPVLSAERPTVRGGLFLPPSPATSR. Residues 1–61 constitute a chloroplast transit peptide; it reads MASSMAATAT…ATRKPRSLPR (61 aa). 83-88 is an ATP binding site; sequence ASGKGT. Residues 103–132 form an NMP region; that stretch reads SAGDLLRAEIAAGSENGKRAKEFMEKGQLV. AMP contacts are provided by residues R109, 130–132, 159–162, and Q166; these read QLV and GYPR. Residues R193, R197, and 206–207 each bind ATP; that span reads IY. The LID stretch occupies residues 196-229; sequence GRRLDPVTGKIYHLKYSPPENEEIASRLTQRFDD. Positions 226 and 237 each coordinate AMP.

Belongs to the adenylate kinase family.

Its subcellular location is the plastid. It is found in the chloroplast. The catalysed reaction is AMP + ATP = 2 ADP. Catalyzes the reversible transfer of the terminal phosphate group between ATP and AMP. Plays an important role in cellular energy homeostasis and in adenine nucleotide metabolism. The chain is Probable adenylate kinase 2, chloroplastic from Oryza sativa subsp. japonica (Rice).